The primary structure comprises 502 residues: Cytochrome P450 CYP94D109 (502 aa).

A helical transmembrane segment spans residues 3 to 23 (SLSLIFISFITLIVFLVVSAS). Cys-437 is a heme binding site.

Belongs to the cytochrome P450 family. As to expression, mainly expressed in leaves and, at low levels, in roots, fruits and stems.

The protein resides in the membrane. Its pathway is steroid metabolism; cholesterol metabolism. In terms of biological role, involved in the biosynthesis of spiroketal steroid and saponin natural products from cholesterol such as diosgenin and analogs (e.g. furostanol and spirostanol), plant defense compounds used as main precursors for the industrial production of steroid hormones. During the 5,6-spiroketalization of cholesterol, may catalyze the 27-monohydroxylation of furostanol-type steroid to an intermediate product that undergoes a stereospecific formation of the terminal heterocycle to yield diosgenin. This Paris polyphylla (Daiswa polyphylla) protein is Cytochrome P450 CYP94D109.